A 540-amino-acid chain; its full sequence is Patellin-4 (540 aa).

Serine 53 bears the Phosphoserine mark. A coiled-coil region spans residues 61–183; it reads FADLKESEKK…EKKTEDVVTE (123 aa). Residues 89–140 form a disordered region; sequence LKTKKKESSPMKEKKEEVVKPEAEVEKKKEEAAEEKVEEEKKSEAVVTEEAP. A compositionally biased stretch (basic and acidic residues) spans 94 to 140; the sequence is KESSPMKEKKEEVVKPEAEVEKKKEEAAEEKVEEEKKSEAVVTEEAP. Lysine 249 participates in a covalent cross-link: Glycyl lysine isopeptide (Lys-Gly) (interchain with G-Cter in ubiquitin). A CRAL-TRIO domain is found at 258–428; the sequence is GEEFGEDLAT…QYGGFKTVDD (171 aa). Residues 433 to 534 form the GOLD domain; it reads NETVSEVVVK…KKKVLYRYRT (102 aa).

Belongs to the patellin family.

It is found in the membrane. The protein resides in the cytoplasm. In terms of biological role, carrier protein that may be involved in membrane-trafficking events associated with cell plate formation during cytokinesis. Binds to some hydrophobic molecules such as phosphoinositides and promotes their transfer between the different cellular sites. The protein is Patellin-4 (PATL4) of Arabidopsis thaliana (Mouse-ear cress).